Here is a 234-residue protein sequence, read N- to C-terminus: tRNA (guanine-N(1)-)-methyltransferase (234 aa).

Residues Gly115 and 135–140 (VGDYIL) contribute to the S-adenosyl-L-methionine site.

This sequence belongs to the RNA methyltransferase TrmD family. As to quaternary structure, homodimer.

It localises to the cytoplasm. It carries out the reaction guanosine(37) in tRNA + S-adenosyl-L-methionine = N(1)-methylguanosine(37) in tRNA + S-adenosyl-L-homocysteine + H(+). Specifically methylates guanosine-37 in various tRNAs. This is tRNA (guanine-N(1)-)-methyltransferase from Rickettsia rickettsii (strain Iowa).